Consider the following 432-residue polypeptide: Gamma-glutamyl phosphate reductase (432 aa).

The protein belongs to the gamma-glutamyl phosphate reductase family.

Its subcellular location is the cytoplasm. The enzyme catalyses L-glutamate 5-semialdehyde + phosphate + NADP(+) = L-glutamyl 5-phosphate + NADPH + H(+). It participates in amino-acid biosynthesis; L-proline biosynthesis; L-glutamate 5-semialdehyde from L-glutamate: step 2/2. Functionally, catalyzes the NADPH-dependent reduction of L-glutamate 5-phosphate into L-glutamate 5-semialdehyde and phosphate. The product spontaneously undergoes cyclization to form 1-pyrroline-5-carboxylate. The protein is Gamma-glutamyl phosphate reductase of Methylorubrum extorquens (strain CM4 / NCIMB 13688) (Methylobacterium extorquens).